Consider the following 426-residue polypeptide: Serine--tRNA ligase (426 aa).

233–235 (TAE) contacts L-serine. 264–266 (RSE) contributes to the ATP binding site. An L-serine-binding site is contributed by glutamate 287. Position 351–354 (351–354 (EISS)) interacts with ATP. Serine 387 contributes to the L-serine binding site.

The protein belongs to the class-II aminoacyl-tRNA synthetase family. Type-1 seryl-tRNA synthetase subfamily. As to quaternary structure, homodimer. The tRNA molecule binds across the dimer.

It localises to the cytoplasm. The catalysed reaction is tRNA(Ser) + L-serine + ATP = L-seryl-tRNA(Ser) + AMP + diphosphate + H(+). The enzyme catalyses tRNA(Sec) + L-serine + ATP = L-seryl-tRNA(Sec) + AMP + diphosphate + H(+). It functions in the pathway aminoacyl-tRNA biosynthesis; selenocysteinyl-tRNA(Sec) biosynthesis; L-seryl-tRNA(Sec) from L-serine and tRNA(Sec): step 1/1. In terms of biological role, catalyzes the attachment of serine to tRNA(Ser). Is also able to aminoacylate tRNA(Sec) with serine, to form the misacylated tRNA L-seryl-tRNA(Sec), which will be further converted into selenocysteinyl-tRNA(Sec). The chain is Serine--tRNA ligase from Pseudomonas syringae pv. syringae (strain B728a).